The primary structure comprises 1686 residues: MPGGPSPRSPAPLLRPLLLLLCALAPGAPGPAPGRATEGRAALDIVHPVRVDAGGSFLSYELWPRALRKRDVSVRRDAPAFYELQYRGRELRFNLTANQHLLAPGFVSETRRRGGLGRAHIRAHTPACHLLGEVQDPELEGGLAAISACDGLKGVFQLSNEDYFIEPLDSAPARPGHAQPHVVYKRQAPERLAQRGDSSAPSTCGVQVYPELESRRERWEQRQQWRRPRLRRLHQRSVSKEKWVETLVVADAKMVEYHGQPQVESYVLTIMNMVAGLFHDPSIGNPIHITIVRLVLLEDEEEDLKITHHADNTLKSFCKWQKSINMKGDAHPLHHDTAILLTRKDLCAAMNRPCETLGLSHVAGMCQPHRSCSINEDTGLPLAFTVAHELGHSFGIQHDGSGNDCEPVGKRPFIMSPQLLYDAAPLTWSRCSRQYITRFLDRGWGLCLDDPPAKDIIDFPSVPPGVLYDVSHQCRLQYGAYSAFCEDMDNVCHTLWCSVGTTCHSKLDAAVDGTRCGENKWCLSGECVPVGFRPEAVDGGWSGWSAWSICSRSCGMGVQSAERQCTQPTPKYKGRYCVGERKRFRLCNLQACPAGRPSFRHVQCSHFDAMLYKGQLHTWVPVVNDVNPCELHCRPANEYFAEKLRDAVVDGTPCYQVRASRDLCINGICKNVGCDFEIDSGAMEDRCGVCHGNGSTCHTVSGTFEEAEGLGYVDVGLIPAGAREIRIQEVAEAANFLALRSEDPEKYFLNGGWTIQWNGDYQVAGTTFTYARRGNWENLTSPGPTKEPVWIQLLFQESNPGVHYEYTIHREAGGHDEVPPPVFSWHYGPWTKCTVTCGRGVQRQNVYCLERQAGPVDEEHCDPLGRPDDQQRKCSEQPCPARWWAGEWQLCSSSCGPGGLSRRAVLCIRSVGLDEQSALEPPACEHLPRPPTETPCNRHVPCPATWAVGNWSQCSVTCGEGTQRRNVLCTNDTGVPCDEAQQPASEVTCSLPLCRWPLGTLGPEGSGSGSSSHELFNEADFIPHHLAPRPSPASSPKPGTMGNAIEEEAPELDLPGPVFVDDFYYDYNFINFHEDLSYGPSEEPDLDLAGTGDRTPPPHSHPAAPSTGSPVPATEPPAAKEEGVLGPWSPSPWPSQAGRSPPPPSEQTPGNPLINFLPEEDTPIGAPDLGLPSLSWPRVSTDGLQTPATPESQNDFPVGKDSQSQLPPPWRDRTNEVFKDDEEPKGRGAPHLPPRPSSTLPPLSPVGSTHSSPSPDVAELWTGGTVAWEPALEGGLGPVDSELWPTVGVASLLPPPIAPLPEMKVRDSSLEPGTPSFPTPGPGSWDLQTVAVWGTFLPTTLTGLGHMPEPALNPGPKGQPESLSPEVPLSSRLLSTPAWDSPANSHRVPETQPLAPSLAEAGPPADPLVVRNAGWQAGNWSECSTTCGLGAVWRPVRCSSGRDEDCAPAGRPQPARRCHLRPCATWHSGNWSKCSRSCGGGSSVRDVQCVDTRDLRPLRPFHCQPGPAKPPAHRPCGAQPCLSWYTSSWRECSEACGGGEQQRLVTCPEPGLCEEALRPNTTRPCNTHPCTQWVVGPWGQCSGPCGGGVQRRLVKCVNTQTGLPEEDSDQCGHEAWPESSRPCGTEDCEPVEPPRCERDRLSFGFCETLRLLGRCQLPTIRTQCCRSCSPPSHGAPSRGHQRVARR.

Positions Met-1–Gly-27 are cleaved as a signal peptide. Positions Ala-28–Arg-236 are excised as a propeptide. Asn-94 is a glycosylation site (N-linked (GlcNAc...) asparagine). Positions Ser-202–Tyr-209 match the Cysteine switch motif. Cys-204 serves as a coordination point for Zn(2+). Positions Lys-242–Pro-452 constitute a Peptidase M12B domain. Cystine bridges form between Cys-318–Cys-372, Cys-347–Cys-354, Cys-366–Cys-447, Cys-405–Cys-431, Cys-474–Cys-497, Cys-485–Cys-503, Cys-492–Cys-522, Cys-516–Cys-527, Cys-550–Cys-587, Cys-554–Cys-592, and Cys-565–Cys-577. His-388 provides a ligand contact to Zn(2+). Glu-389 is a catalytic residue. Zn(2+) contacts are provided by His-392 and His-398. Residues Val-462 to Val-537 form the Disintegrin domain. A TSP type-1 1 domain is found at Asp-538–Pro-593. 2 N-linked (GlcNAc...) asparagine glycosylation sites follow: Asn-693 and Asn-778. The interval His-698–His-809 is spacer. TSP type-1 domains lie at Pro-821 to Pro-880, Ala-881 to Val-940, and Cys-942 to Arg-995. 3 disordered regions span residues His-1024–Asn-1043, Pro-1080–Val-1257, and Leu-1344–Pro-1396. Positions Asp-1182–Gln-1205 are enriched in polar residues. Over residues Trp-1210–Gly-1226 the composition is skewed to basic and acidic residues. Positions Pro-1360–Ser-1375 are enriched in low complexity. 4 consecutive TSP type-1 domains span residues Arg-1411–His-1459, Pro-1462–Leu-1522, Ser-1523–Thr-1567, and Pro-1569–Glu-1629. In terms of domain architecture, PLAC spans Glu-1632 to Ser-1672. Residues Arg-1666–Arg-1686 form a disordered region.

In terms of assembly, interacts with COMP. Requires Zn(2+) as cofactor. Post-translationally, N-glycosylated. Can be O-fucosylated by POFUT2 on a serine or a threonine residue found within the consensus sequence C1-X(2)-(S/T)-C2-G of the TSP type-1 repeat domains where C1 and C2 are the first and second cysteine residue of the repeat, respectively. Fucosylated repeats can then be further glycosylated by the addition of a beta-1,3-glucose residue by the glucosyltransferase, B3GALTL. Fucosylation mediates the efficient secretion of ADAMTS family members. Can also be C-glycosylated with one or two mannose molecules on tryptophan residues within the consensus sequence W-X-X-W of the TPRs. N- and C-glycosylations can also facilitate secretion. O-glycosylated proteoglycan; contains chondroitin sulfate. In terms of processing, may be cleaved by a furin endopeptidase. The precursor is sequentially processed. Expressed in heart, brain, placenta, lung, liver, skeletal muscle, kidney and pancreas. Detected in meniscus, bone, tendon, cartilage, synovium, fat and ligaments.

It is found in the secreted. The protein resides in the extracellular space. It localises to the extracellular matrix. Its function is as follows. Metalloprotease. Was previously shown to degrade COMP. However, a later study found no activity against COMP. This is A disintegrin and metalloproteinase with thrombospondin motifs 7 (ADAMTS7) from Homo sapiens (Human).